The chain runs to 421 residues: DUF724 domain-containing protein 8 (421 aa).

Polar residues-rich tracts occupy residues 149–165 and 199–213; these read TQGS…NANE and PRNQ…TLEN. The interval 149–229 is disordered; the sequence is TQGSGDKTGD…NRKRKREENL (81 aa). The DUF724 domain occupies 246–420; the sequence is VLPFEKKLRI…LEFLATASAP (175 aa). A coiled-coil region spans residues 361 to 397; that stretch reads EKVTAEKESVKAENKRKILELQRLNEEMDKEIAQSKS.

As to expression, expressed in leaves and flowers, and at lower levels in roots, stems and siliques.

The protein resides in the nucleus. Its function is as follows. May be involved in the polar growth of plant cells via transportation of RNAs. The sequence is that of DUF724 domain-containing protein 8 from Arabidopsis thaliana (Mouse-ear cress).